The primary structure comprises 266 residues: Protein STAY-GREEN homolog, chloroplastic (266 aa).

The transit peptide at 1-50 (MGTLTASLVAPSKLNPEKHSSLFVYKTRRKSHKNQSIVPVARLFGPAIFE) directs the protein to the chloroplast.

It belongs to the staygreen family.

It localises to the plastid. The protein localises to the chloroplast. Functionally, required to trigger chlorophyll degradation during leaf senescence and fruit ripening. In Capsicum annuum (Capsicum pepper), this protein is Protein STAY-GREEN homolog, chloroplastic.